The sequence spans 501 residues: Glutamyl-tRNA(Gln) amidotransferase subunit A (501 aa).

Residues Lys-80 and Ser-155 each act as charge relay system in the active site. Ser-179 serves as the catalytic Acyl-ester intermediate.

It belongs to the amidase family. GatA subfamily. In terms of assembly, heterotrimer of A, B and C subunits.

The enzyme catalyses L-glutamyl-tRNA(Gln) + L-glutamine + ATP + H2O = L-glutaminyl-tRNA(Gln) + L-glutamate + ADP + phosphate + H(+). Its function is as follows. Allows the formation of correctly charged Gln-tRNA(Gln) through the transamidation of misacylated Glu-tRNA(Gln) in organisms which lack glutaminyl-tRNA synthetase. The reaction takes place in the presence of glutamine and ATP through an activated gamma-phospho-Glu-tRNA(Gln). The sequence is that of Glutamyl-tRNA(Gln) amidotransferase subunit A from Cupriavidus taiwanensis (strain DSM 17343 / BCRC 17206 / CCUG 44338 / CIP 107171 / LMG 19424 / R1) (Ralstonia taiwanensis (strain LMG 19424)).